The primary structure comprises 200 residues: Dephospho-CoA kinase (200 aa).

The 198-residue stretch at Arg-3–Lys-200 folds into the DPCK domain. An ATP-binding site is contributed by Gly-11–Thr-16.

The protein belongs to the CoaE family.

The protein resides in the cytoplasm. The catalysed reaction is 3'-dephospho-CoA + ATP = ADP + CoA + H(+). It participates in cofactor biosynthesis; coenzyme A biosynthesis; CoA from (R)-pantothenate: step 5/5. In terms of biological role, catalyzes the phosphorylation of the 3'-hydroxyl group of dephosphocoenzyme A to form coenzyme A. The sequence is that of Dephospho-CoA kinase from Corynebacterium efficiens (strain DSM 44549 / YS-314 / AJ 12310 / JCM 11189 / NBRC 100395).